A 120-amino-acid chain; its full sequence is Glycine cleavage system H protein (120 aa).

The 83-residue stretch at 20-102 (DGTVGISDHA…YEGGWLFKLD (83 aa)) folds into the Lipoyl-binding domain. N6-lipoyllysine is present on lysine 61.

The protein belongs to the GcvH family. The glycine cleavage system is composed of four proteins: P, T, L and H. (R)-lipoate is required as a cofactor.

Functionally, the glycine cleavage system catalyzes the degradation of glycine. The H protein shuttles the methylamine group of glycine from the P protein to the T protein. This is Glycine cleavage system H protein from Deinococcus radiodurans (strain ATCC 13939 / DSM 20539 / JCM 16871 / CCUG 27074 / LMG 4051 / NBRC 15346 / NCIMB 9279 / VKM B-1422 / R1).